Here is a 223-residue protein sequence, read N- to C-terminus: Interleukin-12 subunit alpha (223 aa).

Positions 1 to 23 (MCPSARSLLLLASLVLLEHLGSA) are cleaved as a signal peptide. N-linked (GlcNAc...) asparagine glycosylation is found at Asn41, Asn79, Asn121, and Asn176. Cystine bridges form between Cys66–Cys200 and Cys87–Cys125.

This sequence belongs to the IL-6 superfamily. In terms of assembly, heterodimer with IL12B; disulfide-linked. This heterodimer is known as interleukin IL-12. Heterodimer with EBI3/IL27B; not disulfide-linked. This heterodimer is known as interleukin IL-35. Interacts with NBR1; this interaction promotes IL-12 secretion.

The protein localises to the secreted. In terms of biological role, heterodimerizes with IL12B to form the IL-12 cytokine or with EBI3/IL27B to form the IL-35 cytokine. IL-12 is primarily produced by professional antigen-presenting cells (APCs) such as B-cells and dendritic cells (DCs) as well as macrophages and granulocytes and regulates T-cell and natural killer-cell responses, induces the production of interferon-gamma (IFN-gamma), favors the differentiation of T-helper 1 (Th1) cells and is an important link between innate resistance and adaptive immunity. Mechanistically, exerts its biological effects through a receptor composed of IL12R1 and IL12R2 subunits. Binding to the receptor results in the rapid tyrosine phosphorylation of a number of cellular substrates including the JAK family kinases TYK2 and JAK2. In turn, recruited STAT4 gets phosphorylated and translocates to the nucleus where it regulates cytokine/growth factor responsive genes. As part of IL-35, plays essential roles in maintaining the immune homeostasis of the liver microenvironment and also functions as an immune-suppressive cytokine. Mediates biological events through unconventional receptors composed of IL12RB2 and gp130/IL6ST heterodimers or homodimers. Signaling requires the transcription factors STAT1 and STAT4, which form a unique heterodimer that binds to distinct DNA sites. The chain is Interleukin-12 subunit alpha (IL12A) from Marmota monax (Woodchuck).